A 284-amino-acid polypeptide reads, in one-letter code: MMRILLFLATNAAVLIVFNIILSLTGIRGQDAMGLLIMAALFGFTGSIISLLMSKRSALAATGAEVIEQPRNDTERWLLQTVHSQAEKAGLPKPDVAIYHSNDVNAFATGASKNNSLVAVSTALLNNMTRDEAEGVLAHEISHIKNGDMVTMTLLQGVLNTFVIFAARMIARMVANNRSSEESNSGIYFLVAMVLEVVFGFLASMIAMWFSRFREFRADAGSAELAGKQKMIAALKRLQAIHEPQEMDGKLAAFAINGKRGGFTSLFLSHPPLEKRIEALETSK.

2 consecutive transmembrane segments (helical) span residues 4–24 (ILLF…ILSL) and 33–53 (MGLL…SLLM). His-139 lines the Zn(2+) pocket. The active site involves Glu-140. His-143 is a binding site for Zn(2+). 2 helical membrane-spanning segments follow: residues 147–167 (GDMV…IFAA) and 187–207 (IYFL…SMIA). Glu-215 is a binding site for Zn(2+).

Belongs to the peptidase M48B family. Zn(2+) serves as cofactor.

Its subcellular location is the cell inner membrane. The protein is Protease HtpX of Mannheimia succiniciproducens (strain KCTC 0769BP / MBEL55E).